We begin with the raw amino-acid sequence, 53 residues long: Cytochrome c-552 (53 aa).

Heme c contacts are provided by Cys19, Cys22, His23, and Met44.

Post-translationally, binds 1 heme c group covalently per subunit.

The protein resides in the cell membrane. The chain is Cytochrome c-552 from Schinkia azotoformans (Bacillus azotoformans).